Here is a 213-residue protein sequence, read N- to C-terminus: Glycerol-3-phosphate acyltransferase (213 aa).

Helical transmembrane passes span 3 to 23 (LLLF…LWIG), 68 to 88 (ILLP…GFFA), 112 to 132 (VLLG…VLVL), 134 to 154 (LFSM…LSVL), and 163 to 183 (LPNY…IIII).

Belongs to the PlsY family. As to quaternary structure, probably interacts with PlsX.

The protein resides in the cell membrane. The catalysed reaction is an acyl phosphate + sn-glycerol 3-phosphate = a 1-acyl-sn-glycero-3-phosphate + phosphate. The protein operates within lipid metabolism; phospholipid metabolism. Its function is as follows. Catalyzes the transfer of an acyl group from acyl-phosphate (acyl-PO(4)) to glycerol-3-phosphate (G3P) to form lysophosphatidic acid (LPA). This enzyme utilizes acyl-phosphate as fatty acyl donor, but not acyl-CoA or acyl-ACP. The sequence is that of Glycerol-3-phosphate acyltransferase from Streptococcus pyogenes serotype M28 (strain MGAS6180).